Consider the following 338-residue polypeptide: Serpentine receptor class alpha-31 (338 aa).

A run of 7 helical transmembrane segments spans residues G23–I43, L59–I79, L108–F125, F142–F162, V188–F208, V240–I260, and S276–Y296.

It belongs to the nematode receptor-like protein sra family.

It is found in the membrane. This is Serpentine receptor class alpha-31 (sra-31) from Caenorhabditis elegans.